The primary structure comprises 439 residues: Fibulin-7 (439 aa).

The first 24 residues, 1-24 (MVPSSPRALFLLLLILACPEPRAS), serve as a signal peptide directing secretion. Positions 28–53 (LSKQQLLSAIRQLQQLLKGQETRFAE) form a coiled coil. Positions 79 to 136 (VSCPALNTPADGRKFGSKYLVDHEVHFTCNPGFRLVGPSSVVCLPNGTWTGEQPHCRG) constitute a Sushi domain. 11 disulfide bridges follow: Cys81/Cys121, Cys107/Cys134, Cys140/Cys151, Cys145/Cys160, Cys162/Cys171, Cys228/Cys244, Cys240/Cys253, Cys255/Cys268, Cys274/Cys287, Cys281/Cys296, and Cys301/Cys318. Residue Asn124 is glycosylated (N-linked (GlcNAc...) asparagine). Positions 136–172 (GISECSSQPCQNGGTCVEGVNQYRCICPPGRTGNRCQ) constitute an EGF-like 1; calcium-binding domain. The 46-residue stretch at 224–269 (DVNECELYGQEGRPRLCMHACVNTPGSYRCTCPGGYRTLADGKSCE) folds into the EGF-like 2; calcium-binding domain. The region spanning 270-319 (DVDECVGLQPVCPQGTTCINTGGSFQCVSPECPEGSGNVSYVKTSPFQCE) is the EGF-like 3; calcium-binding domain. Asn307 carries N-linked (GlcNAc...) asparagine glycosylation.

Belongs to the fibulin family. Interacts with heparin, FBLN1, FN1 and DSPP. Preferentially binds dental mesenchyme cells and odontoblasts but not dental epithelial cells or nondental cells. Binding requires a heparan sulfate-containing receptor on the cell surface as well as an integrin. In terms of processing, N-glycosylated.

The protein localises to the secreted. The protein resides in the extracellular space. Its subcellular location is the extracellular matrix. Functionally, an adhesion molecule that interacts with extracellular matrix molecules in developing teeth and may play important roles in differentiation and maintenance of odontoblasts as well as in dentin formation. In Homo sapiens (Human), this protein is Fibulin-7 (FBLN7).